Reading from the N-terminus, the 87-residue chain is Cx9C motif-containing protein 4, mitochondrial (87 aa).

One can recognise a CHCH domain in the interval 9 to 51 (ENACKPFACAIQDCLIENGYNESKCTKAIDNLYKCCKQFYEEN). 2 short sequence motifs (cx9C motif) span residues 12–22 (CKPFACAIQDC) and 33–43 (CTKAIDNLYKC). 2 disulfides stabilise this stretch: cysteine 12–cysteine 43 and cysteine 22–cysteine 33.

This sequence belongs to the CMC4 family.

It is found in the mitochondrion intermembrane space. This Clavispora lusitaniae (strain ATCC 42720) (Yeast) protein is Cx9C motif-containing protein 4, mitochondrial (CMC4).